Consider the following 205-residue polypeptide: Outer-membrane lipoprotein LolB (205 aa).

The N-terminal stretch at 1–17 is a signal peptide; it reads MFLRHVIVFSLIALLTG. The N-palmitoyl cysteine moiety is linked to residue Cys-18. Residue Cys-18 is the site of S-diacylglycerol cysteine attachment.

Belongs to the LolB family. As to quaternary structure, monomer.

The protein localises to the cell outer membrane. Functionally, plays a critical role in the incorporation of lipoproteins in the outer membrane after they are released by the LolA protein. The polypeptide is Outer-membrane lipoprotein LolB (Pseudomonas savastanoi pv. phaseolicola (strain 1448A / Race 6) (Pseudomonas syringae pv. phaseolicola (strain 1448A / Race 6))).